The primary structure comprises 345 residues: Phosphoribosylformylglycinamidine cyclo-ligase (345 aa).

It belongs to the AIR synthase family.

It is found in the cytoplasm. It catalyses the reaction 2-formamido-N(1)-(5-O-phospho-beta-D-ribosyl)acetamidine + ATP = 5-amino-1-(5-phospho-beta-D-ribosyl)imidazole + ADP + phosphate + H(+). Its pathway is purine metabolism; IMP biosynthesis via de novo pathway; 5-amino-1-(5-phospho-D-ribosyl)imidazole from N(2)-formyl-N(1)-(5-phospho-D-ribosyl)glycinamide: step 2/2. The polypeptide is Phosphoribosylformylglycinamidine cyclo-ligase (Synechococcus sp. (strain CC9605)).